The chain runs to 139 residues: MGMMQEFKEFAVKGNVVDLAVAVIVGAAFGKIVDSLVQDVIMPVVGKIFGGLDFSNYYIALNNQDPNLTLVEAKKLGAVLAYGNFITIALNFIILAFIIFQMVRLLNKLKRTEPPAPEEPAAVPEDIALLREIRDSLKK.

The next 3 helical transmembrane spans lie at 10 to 30, 40 to 60, and 80 to 100; these read FAVK…AAFG, VIMP…YYIA, and LAYG…FIIF.

This sequence belongs to the MscL family. In terms of assembly, homopentamer.

Its subcellular location is the cell inner membrane. Its function is as follows. Channel that opens in response to stretch forces in the membrane lipid bilayer. May participate in the regulation of osmotic pressure changes within the cell. This chain is Large-conductance mechanosensitive channel, found in Janthinobacterium sp. (strain Marseille) (Minibacterium massiliensis).